Consider the following 215-residue polypeptide: Large ribosomal subunit protein uL3 (215 aa).

The segment at 136–155 is disordered; that stretch reads GVSISHRSHGSTGQRQDPGK. Glutamine 151 carries the post-translational modification N5-methylglutamine.

This sequence belongs to the universal ribosomal protein uL3 family. Part of the 50S ribosomal subunit. Forms a cluster with proteins L14 and L19. Methylated by PrmB.

Functionally, one of the primary rRNA binding proteins, it binds directly near the 3'-end of the 23S rRNA, where it nucleates assembly of the 50S subunit. The polypeptide is Large ribosomal subunit protein uL3 (Rickettsia conorii (strain ATCC VR-613 / Malish 7)).